The primary structure comprises 599 residues: Elongation factor 4 (599 aa).

One can recognise a tr-type G domain in the interval 2-184; that stretch reads NYKRNFSIIA…RLVRDIPAPK (183 aa). Residues 14-19 and 131-134 each bind GTP; these read DHGKST and NKID.

It belongs to the TRAFAC class translation factor GTPase superfamily. Classic translation factor GTPase family. LepA subfamily.

It is found in the cell membrane. It catalyses the reaction GTP + H2O = GDP + phosphate + H(+). Functionally, required for accurate and efficient protein synthesis under certain stress conditions. May act as a fidelity factor of the translation reaction, by catalyzing a one-codon backward translocation of tRNAs on improperly translocated ribosomes. Back-translocation proceeds from a post-translocation (POST) complex to a pre-translocation (PRE) complex, thus giving elongation factor G a second chance to translocate the tRNAs correctly. Binds to ribosomes in a GTP-dependent manner. The polypeptide is Elongation factor 4 (Hamiltonella defensa subsp. Acyrthosiphon pisum (strain 5AT)).